The primary structure comprises 222 residues: 2-C-methyl-D-erythritol 2,4-cyclodiphosphate synthase, chloroplastic (222 aa).

Residues 1-43 constitute a chloroplast transit peptide; it reads MATASSLFLASPVATAPTARARSTPSASPARPSLRLRRPSTLA. 2 residues coordinate a divalent metal cation: aspartate 73 and histidine 75. Substrate contacts are provided by residues 73-75, 99-100, 103-111, 121-123, 126-130, aspartate 130, 165-171, and 196-200; these read DLH, HS, DVLLHCVVD, DIG, FPDSD, LQKPKIS, and AKTHE. An a divalent metal cation-binding site is contributed by histidine 107.

It belongs to the IspF family. In terms of assembly, homotrimer. A divalent metal cation is required as a cofactor. In terms of tissue distribution, expressed in roots, leaves, stems, leaf sheaths and young panicles.

It localises to the plastid. The protein localises to the chloroplast. The catalysed reaction is 4-CDP-2-C-methyl-D-erythritol 2-phosphate = 2-C-methyl-D-erythritol 2,4-cyclic diphosphate + CMP. It functions in the pathway isoprenoid biosynthesis; isopentenyl diphosphate biosynthesis via DXP pathway; isopentenyl diphosphate from 1-deoxy-D-xylulose 5-phosphate: step 4/6. Enzyme of the plastid non-mevalonate pathway for isoprenoid biosynthesis that converts 4-diphosphocytidyl-2C-methyl-D-erythritol 2-phosphate into 2C-methyl-D-erythritol 2,4-cyclodiphosphate and CMP. Is essential for chloroplast development. In Oryza sativa subsp. japonica (Rice), this protein is 2-C-methyl-D-erythritol 2,4-cyclodiphosphate synthase, chloroplastic.